Reading from the N-terminus, the 470-residue chain is Aspartyl aminopeptidase (470 aa).

H92 contacts Zn(2+). H166 contributes to the substrate binding site. D263 provides a ligand contact to Zn(2+). E299 is a binding site for substrate. Zn(2+)-binding residues include E300 and D343. Residues D343, H346, K371, and Y378 each contribute to the substrate site. Position 437 (H437) interacts with Zn(2+).

The protein belongs to the peptidase M18 family. In terms of assembly, tetrahedron-shaped homododecamer built from six homodimers. Requires Zn(2+) as cofactor. Expressed in various cell types and tissues including the pharynx, neurons, body wall muscle, intestine and vulva.

It is found in the cytoplasm. It localises to the cytosol. It catalyses the reaction Release of an N-terminal aspartate or glutamate from a peptide, with a preference for aspartate.. Functionally, aminopeptidase with specificity towards an acidic amino acid at the N-terminus. Plays a role in membrane trafficking and is specifically involved in the recycling and degradation of endocytic cargo. The protein is Aspartyl aminopeptidase of Caenorhabditis elegans.